The primary structure comprises 1052 residues: Multidrug resistance protein MdtB (1052 aa).

The next 11 membrane-spanning stretches (helical) occupy residues 15-37 (LFIL…GIIG), 345-362 (FELL…YLFL), 367-389 (ATII…MYFL), 396-418 (LTLM…VIEN), 438-460 (GEIG…PLLF), 472-494 (FAVT…TPMM), 535-557 (HPWL…YLLI), 867-889 (LWLI…ESFI), 909-931 (LMLT…IGIV), 968-990 (ILMT…GVGA), and 1000-1022 (MVGG…YLLF). The segment at 1032-1052 (KNRHRDEDIDSSELLNGQEPQ) is disordered.

This sequence belongs to the resistance-nodulation-cell division (RND) (TC 2.A.6) family. MdtB subfamily. Part of a tripartite efflux system composed of MdtA, MdtB and MdtC. MdtB forms a heteromultimer with MdtC.

Its subcellular location is the cell inner membrane. The sequence is that of Multidrug resistance protein MdtB from Yersinia pestis.